Consider the following 442-residue polypeptide: Histidine--tRNA ligase (442 aa).

It belongs to the class-II aminoacyl-tRNA synthetase family. In terms of assembly, homodimer.

The protein localises to the cytoplasm. It catalyses the reaction tRNA(His) + L-histidine + ATP = L-histidyl-tRNA(His) + AMP + diphosphate + H(+). The sequence is that of Histidine--tRNA ligase from Psychrobacter arcticus (strain DSM 17307 / VKM B-2377 / 273-4).